The chain runs to 933 residues: Progesterone receptor (933 aa).

Residues 1 to 157 (MTELKAKGPR…PEDPPAAPAT (157 aa)) form a disordered region. The tract at residues 1 to 164 (MTELKAKGPR…PATQRVLSPL (164 aa)) is AF3; mediates transcriptional activation (in isoform B). The segment at 1 to 566 (MTELKAKGPR…YSFESLPQKI (566 aa)) is modulating, Pro-Rich. Residue Lys-7 forms a Glycyl lysine isopeptide (Lys-Gly) (interchain with G-Cter in SUMO) linkage. Ser-20 is modified (phosphoserine). The LXXL motif 1 signature appears at 55–59 (LDGLL). Ser-81 and Ser-102 each carry phosphoserine. Positions 115 to 119 (LDTLL) match the LXXL motif 2 motif. Residues Ser-130 and Ser-162 each carry the phosphoserine modification. The tract at residues 165 to 305 (MSRSGCKVGD…LATTVMDFIH (141 aa)) is mediates transcriptional transrepression (in isoform A). A Nuclear localization signal motif is present at residues 183–187 (KVLPR). Phosphoserine is present on residues Ser-190 and Ser-213. Residues 195–241 (LLLPASESPHWSGAPVKPSPQAAAVEVEEEDGSESEESAGPLLKGKP) form a disordered region. Over residues 220–231 (EVEEEDGSESEE) the composition is skewed to acidic residues. Residues 232 to 241 (SAGPLLKGKP) show a composition bias toward low complexity. At Ser-294 the chain carries Phosphoserine; by MAPK1. Residues 331–351 (GGAGAASAFAPPRSSPCASST) are disordered. Residues 335–350 (AASAFAPPRSSPCASS) are compositionally biased toward low complexity. A Phosphoserine; by MAPK modification is found at Ser-345. A Glycyl lysine isopeptide (Lys-Gly) (interchain with G-Cter in SUMO); alternate cross-link involves residue Lys-388. A Glycyl lysine isopeptide (Lys-Gly) (interchain with G-Cter in ubiquitin); alternate cross-link involves residue Lys-388. The residue at position 400 (Ser-400) is a Phosphoserine; by CDK2. The segment at 415 to 452 (PDFPLGPPPPLPPRATPSRPGEAAVTAAPASASVSSAS) is disordered. Residues 418–429 (PLGPPPPLPPRA) are compositionally biased toward pro residues. The segment covering 430 to 452 (TPSRPGEAAVTAAPASASVSSAS) has biased composition (low complexity). An AF1; mediates transcriptional activation region spans residues 456 to 546 (STLECILYKA…VYPPYLNYLR (91 aa)). Lys-531 is covalently cross-linked (Glycyl lysine isopeptide (Lys-Gly) (interchain with G-Cter in SUMO)). 2 consecutive NR C4-type zinc fingers follow at residues 567-587 (CLIC…CGSC) and 603-627 (CAGR…LRKC). A DNA-binding region (nuclear receptor) is located at residues 567–639 (CLICGDEASG…AGMVLGGRKF (73 aa)). A Phosphoserine modification is found at Ser-676. The NR LBD domain occupies 679 to 913 (QDIQLIPPLI…EFPEMMSEVI (235 aa)). Positions 687–933 (LINLLMSIEP…MVKPLLFHKK (247 aa)) are AF2; mediates transcriptional activation. Arg-766 contacts progesterone.

Belongs to the nuclear hormone receptor family. NR3 subfamily. As to quaternary structure, interacts with SMARD1 and UNC45A. Interacts with CUEDC2; the interaction promotes ubiquitination, decreases sumoylation, and represses transcriptional activity. Interacts with PIAS3; the interaction promotes sumoylation of PR in a hormone-dependent manner, inhibits DNA-binding, and alters nuclear export. Interacts with SP1; the interaction requires ligand-induced phosphorylation on Ser-345 by ERK1/2 MAPK. Interacts with PRMT2. Isoform A interacts with NCOR2. Isoform B (but not isoform A) interacts with NCOA2 and NCOA1. Isoform B (but not isoform A) interacts with KLF9. Interacts with GTF2B. In terms of processing, phosphorylated on multiple serine sites. Several of these sites are hormone-dependent. Phosphorylation on Ser-294 occurs preferentially on isoform B, is highly hormone-dependent and modulates ubiquitination and sumoylation on Lys-388. Phosphorylation on Ser-102 and Ser-345 also requires induction by hormone. Basal phosphorylation on Ser-81, Ser-162, Ser-190 and Ser-400 is increased in response to progesterone and can be phosphorylated in vitro by the CDK2-A1 complex. Increased levels of phosphorylation on Ser-400 also in the presence of EGF, heregulin, IGF, PMA and FBS. Phosphorylation at this site by CDK2 is ligand-independent, and increases nuclear translocation and transcriptional activity. Phosphorylation at Ser-162 and Ser-294, but not at Ser-190, is impaired during the G(2)/M phase of the cell cycle. Phosphorylation on Ser-345 by ERK1/2 MAPK is required for interaction with SP1. Sumoylation is hormone-dependent and represses transcriptional activity. Sumoylation on all three sites is enhanced by PIAS3. Desumoylated by SENP1. Sumoylation on Lys-388, the main site of sumoylation, is repressed by ubiquitination on the same site, and modulated by phosphorylation at Ser-294. Post-translationally, ubiquitination is hormone-dependent and represses sumoylation on the same site. Promoted by MAPK-mediated phosphorylation on Ser-294. Ubiquitinated by UBR5, leading to its degradation: UBR5 specifically recognizes and binds ligand-bound PGR when it is not associated with coactivators (NCOAs). In presence of NCOAs, the UBR5-degron is not accessible, preventing its ubiquitination and degradation. In terms of processing, palmitoylated by ZDHHC7 and ZDHHC21. Palmitoylation is required for plasma membrane targeting and for rapid intracellular signaling via ERK and AKT kinases and cAMP generation. In reproductive tissues the expression of isoform A and isoform B varies as a consequence of developmental and hormonal status. Isoform A and isoform B are expressed in comparable levels in uterine glandular epithelium during the proliferative phase of the menstrual cycle. Expression of isoform B but not of isoform A persists in the glands during mid-secretory phase. In the stroma, isoform A is the predominant form throughout the cycle. Heterogeneous isoform expression between the glands of the endometrium basalis and functionalis is implying region-specific responses to hormonal stimuli.

Its subcellular location is the nucleus. The protein localises to the cytoplasm. It is found in the mitochondrion outer membrane. In terms of biological role, the steroid hormones and their receptors are involved in the regulation of eukaryotic gene expression and affect cellular proliferation and differentiation in target tissues. Depending on the isoform, progesterone receptor functions as a transcriptional activator or repressor. Functionally, ligand-dependent transdominant repressor of steroid hormone receptor transcriptional activity including repression of its isoform B, MR and ER. Transrepressional activity may involve recruitment of corepressor NCOR2. Its function is as follows. Transcriptional activator of several progesteron-dependent promoters in a variety of cell types. Involved in activation of SRC-dependent MAPK signaling on hormone stimulation. Increases mitochondrial membrane potential and cellular respiration upon stimulation by progesterone. The chain is Progesterone receptor (PGR) from Homo sapiens (Human).